A 534-amino-acid chain; its full sequence is ATP synthase subunit beta 2 (534 aa).

Residues 1-10 (MADPQATNGT) show a composition bias toward polar residues. Positions 1 to 30 (MADPQATNGTGAACAERDASDVGDVSDVGD) are disordered. ATP is bound at residue 185–192 (GGAGVGKT). The span at 494-505 (AAAREADARREA) shows a compositional bias: basic and acidic residues. Residues 494-534 (AAAREADARREAAAAASGAGPGTTSDPASGSAEPQGARHGR) form a disordered region.

It belongs to the ATPase alpha/beta chains family. As to quaternary structure, F-type ATPases have 2 components, CF(1) - the catalytic core - and CF(0) - the membrane proton channel. CF(1) has five subunits: alpha(3), beta(3), gamma(1), delta(1), epsilon(1). CF(0) has three main subunits: a(1), b(2) and c(9-12). The alpha and beta chains form an alternating ring which encloses part of the gamma chain. CF(1) is attached to CF(0) by a central stalk formed by the gamma and epsilon chains, while a peripheral stalk is formed by the delta and b chains.

The protein resides in the cell inner membrane. The catalysed reaction is ATP + H2O + 4 H(+)(in) = ADP + phosphate + 5 H(+)(out). Functionally, produces ATP from ADP in the presence of a proton gradient across the membrane. The catalytic sites are hosted primarily by the beta subunits. The sequence is that of ATP synthase subunit beta 2 from Burkholderia pseudomallei (strain 668).